Consider the following 212-residue polypeptide: ATP-dependent Clp protease proteolytic subunit (212 aa).

The Nucleophile role is filled by serine 114. Residue histidine 139 is part of the active site.

Belongs to the peptidase S14 family. Fourteen ClpP subunits assemble into 2 heptameric rings which stack back to back to give a disk-like structure with a central cavity, resembling the structure of eukaryotic proteasomes.

It localises to the cytoplasm. The enzyme catalyses Hydrolysis of proteins to small peptides in the presence of ATP and magnesium. alpha-casein is the usual test substrate. In the absence of ATP, only oligopeptides shorter than five residues are hydrolyzed (such as succinyl-Leu-Tyr-|-NHMec, and Leu-Tyr-Leu-|-Tyr-Trp, in which cleavage of the -Tyr-|-Leu- and -Tyr-|-Trp bonds also occurs).. In terms of biological role, cleaves peptides in various proteins in a process that requires ATP hydrolysis. Has a chymotrypsin-like activity. Plays a major role in the degradation of misfolded proteins. This is ATP-dependent Clp protease proteolytic subunit from Azoarcus sp. (strain BH72).